Consider the following 255-residue polypeptide: 5'-nucleotidase SurE (255 aa).

A divalent metal cation contacts are provided by Asp-11, Asp-12, Ser-43, and Asn-99.

The protein belongs to the SurE nucleotidase family. A divalent metal cation serves as cofactor.

Its subcellular location is the cytoplasm. It carries out the reaction a ribonucleoside 5'-phosphate + H2O = a ribonucleoside + phosphate. Its function is as follows. Nucleotidase that shows phosphatase activity on nucleoside 5'-monophosphates. This Caldanaerobacter subterraneus subsp. tengcongensis (strain DSM 15242 / JCM 11007 / NBRC 100824 / MB4) (Thermoanaerobacter tengcongensis) protein is 5'-nucleotidase SurE.